A 610-amino-acid polypeptide reads, in one-letter code: Glutamine--fructose-6-phosphate aminotransferase [isomerizing] (610 aa).

Cys-2 acts as the Nucleophile; for GATase activity in catalysis. Residues 2 to 218 (CGIVGAVAQR…EGDVAEITRH (217 aa)) enclose the Glutamine amidotransferase type-2 domain. 2 SIS domains span residues 286–426 (AADI…LKGR) and 459–600 (LSED…VDQP). The For Fru-6P isomerization activity role is filled by Lys-605.

Homodimer.

The protein localises to the cytoplasm. The catalysed reaction is D-fructose 6-phosphate + L-glutamine = D-glucosamine 6-phosphate + L-glutamate. Catalyzes the first step in hexosamine metabolism, converting fructose-6P into glucosamine-6P using glutamine as a nitrogen source. This chain is Glutamine--fructose-6-phosphate aminotransferase [isomerizing], found in Haemophilus ducreyi (strain 35000HP / ATCC 700724).